The sequence spans 444 residues: Argininosuccinate synthase (444 aa).

Residues 17 to 25 (AFSGGLDTS) and Ala43 contribute to the ATP site. Tyr99 lines the L-citrulline pocket. ATP contacts are provided by Gly129 and Thr131. Positions 131, 135, and 136 each coordinate L-aspartate. Residue Asn135 coordinates L-citrulline. Asp136 serves as a coordination point for ATP. L-citrulline is bound by residues Arg139 and Ser192. Residue Asp194 coordinates ATP. L-citrulline is bound by residues Thr201, Glu203, and Glu280.

It belongs to the argininosuccinate synthase family. Type 2 subfamily. Homotetramer.

The protein resides in the cytoplasm. It catalyses the reaction L-citrulline + L-aspartate + ATP = 2-(N(omega)-L-arginino)succinate + AMP + diphosphate + H(+). It participates in amino-acid biosynthesis; L-arginine biosynthesis; L-arginine from L-ornithine and carbamoyl phosphate: step 2/3. The sequence is that of Argininosuccinate synthase from Burkholderia lata (strain ATCC 17760 / DSM 23089 / LMG 22485 / NCIMB 9086 / R18194 / 383).